A 145-amino-acid polypeptide reads, in one-letter code: Ribonuclease P protein component (145 aa).

A disordered region spans residues 119-145 (PLPAAPGTMPPARTVRPSSPSPTEPEL).

Belongs to the RnpA family. Consists of a catalytic RNA component (M1 or rnpB) and a protein subunit.

It catalyses the reaction Endonucleolytic cleavage of RNA, removing 5'-extranucleotides from tRNA precursor.. Its function is as follows. RNaseP catalyzes the removal of the 5'-leader sequence from pre-tRNA to produce the mature 5'-terminus. It can also cleave other RNA substrates such as 4.5S RNA. The protein component plays an auxiliary but essential role in vivo by binding to the 5'-leader sequence and broadening the substrate specificity of the ribozyme. The protein is Ribonuclease P protein component of Xanthomonas euvesicatoria pv. vesicatoria (strain 85-10) (Xanthomonas campestris pv. vesicatoria).